The following is a 142-amino-acid chain: Baculoviral IAP repeat-containing protein 5 (142 aa).

One copy of the BIR repeat lies at 18–88; the sequence is RVSTFKNWPF…KHSSGCAFLS (71 aa). Serine 20 bears the Phosphoserine; by AURKC mark. Residue lysine 23 is modified to N6-acetyllysine. Phosphothreonine; by CDK1 and CDK15 is present on threonine 34. Threonine 48 is subject to Phosphothreonine; by CK2; in vitro. Zn(2+)-binding residues include cysteine 57, cysteine 60, histidine 77, and cysteine 84. N6-acetyllysine occurs at positions 90, 110, 112, and 115. Residue threonine 117 is modified to Phosphothreonine; by AURKB.

The protein belongs to the IAP family. In terms of assembly, monomer or homodimer. Exists as a homodimer in the apo state and as a monomer in the CPC-bound state. The monomer protects cells against apoptosis more efficiently than the dimer. Only the dimeric form is capable of enhancing tubulin stability in cells. When phosphorylated, interacts with LAMTOR5/HBXIP; the resulting complex binds pro-CASP9, as well as active CASP9, but much less efficiently. Component of the chromosomal passenger complex (CPC) composed of at least BIRC5/survivin, CDCA8/borealin, INCENP, AURKB or AURKC; in the complex forms a triple-helix bundle-based subcomplex with INCENP and CDCA8. Interacts with JTB. Interacts (via BIR domain) with histone H3 phosphorylated at 'Thr-3' (H3pT3). Interacts with EVI5. Interacts with GTP-bound RAN in both the S and M phases of the cell cycle. Interacts with USP9X. Interacts with tubulin. Interacts with BIRC2/c-IAP1. The monomeric form interacts with XIAP/BIRC4. Both the dimeric and monomeric form can interact with DIABLO/SMAC. Interacts with BIRC6/bruce. Interacts with FBXL7; this interaction facilitates the polyubiquitination and subsequent proteasomal degradation of BIRC5 by the SCF(FBXL7) E3 ubiquitin-protein ligase complex. Ubiquitinated by the Cul9-RING ubiquitin-protein ligase complex, leading to its degradation. Ubiquitination is required for centrosomal targeting. Deubiquitinated by USP35 or USP38; leading to stabilization. In terms of processing, in vitro phosphorylation at Thr-117 by AURKB prevents interaction with INCENP and localization to mitotic chromosomes. Phosphorylation at Thr-48 by CK2 is critical for its mitotic and anti-apoptotic activities. Phosphorylation at Thr-34 by CDK15 is critical for its anti-apoptotic activity. Phosphorylation at Ser-20 by AURKC is critical for regulation of proper chromosome alignment and segregation, and possibly cytokinesis. In terms of tissue distribution, expressed in spleen, lung, brain, heart, kidney and intestine (at protein level). Expressed in cochlea including the organ of Corti, the lateral wall, the interdental cells of the Limbus as well as in cells of the cochlear nerve and the spiral ganglions (at protein level). Also expressed in Schwann cells (at protein level). Not expressed in cells of the inner and outer sulcus or the Reissner's membrane (at protein level).

It localises to the cytoplasm. Its subcellular location is the nucleus. The protein localises to the chromosome. The protein resides in the centromere. It is found in the cytoskeleton. It localises to the spindle. Its subcellular location is the kinetochore. The protein localises to the midbody. Functionally, multitasking protein that has dual roles in promoting cell proliferation and preventing apoptosis. Component of a chromosome passage protein complex (CPC) which is essential for chromosome alignment and segregation during mitosis and cytokinesis. Acts as an important regulator of the localization of this complex; directs CPC movement to different locations from the inner centromere during prometaphase to midbody during cytokinesis and participates in the organization of the center spindle by associating with polymerized microtubules. Involved in the recruitment of CPC to centromeres during early mitosis via association with histone H3 phosphorylated at 'Thr-3' (H3pT3) during mitosis. The complex with RAN plays a role in mitotic spindle formation by serving as a physical scaffold to help deliver the RAN effector molecule TPX2 to microtubules. May counteract a default induction of apoptosis in G2/M phase. The acetylated form represses STAT3 transactivation of target gene promoters. May play a role in neoplasia. Inhibitor of CASP3 and CASP7. Essential for the maintenance of mitochondrial integrity and function. This is Baculoviral IAP repeat-containing protein 5 from Cavia porcellus (Guinea pig).